Here is a 384-residue protein sequence, read N- to C-terminus: Viral protein 1 (384 aa).

The protein is Viral protein 1 of Chaetoceros setoense (Chaetoceros setoense DNA virus).